The sequence spans 514 residues: ATP synthase subunit alpha (514 aa).

Residue 170–177 (GDRQIGKT) coordinates ATP.

This sequence belongs to the ATPase alpha/beta chains family. In terms of assembly, F-type ATPases have 2 components, CF(1) - the catalytic core - and CF(0) - the membrane proton channel. CF(1) has five subunits: alpha(3), beta(3), gamma(1), delta(1), epsilon(1). CF(0) has three main subunits: a(1), b(2) and c(9-12). The alpha and beta chains form an alternating ring which encloses part of the gamma chain. CF(1) is attached to CF(0) by a central stalk formed by the gamma and epsilon chains, while a peripheral stalk is formed by the delta and b chains.

It localises to the cell inner membrane. It carries out the reaction ATP + H2O + 4 H(+)(in) = ADP + phosphate + 5 H(+)(out). Its function is as follows. Produces ATP from ADP in the presence of a proton gradient across the membrane. The alpha chain is a regulatory subunit. The protein is ATP synthase subunit alpha of Alcanivorax borkumensis (strain ATCC 700651 / DSM 11573 / NCIMB 13689 / SK2).